A 215-amino-acid chain; its full sequence is Ribose-5-phosphate isomerase A (215 aa).

Substrate-binding positions include 26–29, 79–82, and 92–95; these read TGST, DGAD, and KGGG. Glu101 (proton acceptor) is an active-site residue. Position 119 (Lys119) interacts with substrate.

It belongs to the ribose 5-phosphate isomerase family. In terms of assembly, homodimer.

It carries out the reaction aldehydo-D-ribose 5-phosphate = D-ribulose 5-phosphate. It functions in the pathway carbohydrate degradation; pentose phosphate pathway; D-ribose 5-phosphate from D-ribulose 5-phosphate (non-oxidative stage): step 1/1. Catalyzes the reversible conversion of ribose-5-phosphate to ribulose 5-phosphate. This chain is Ribose-5-phosphate isomerase A, found in Xanthomonas campestris pv. campestris (strain 8004).